Reading from the N-terminus, the 183-residue chain is Caltractin ICL1f (183 aa).

Low complexity predominate over residues 1–19; it reads MARRGQQPPQQQQQAQPAQ. The interval 1-30 is disordered; it reads MARRGQQPPQQQQQAQPAQKNQAGKFNPAE. 4 consecutive EF-hand domains span residues 39–74, 75–110, 112–147, and 148–183; these read EEVLEIKEAFDLFDTDGTQSIDPKELKAAMTSLGFE, AKNQTIYQMISDLDTDGSGQIDFAEFLKLMTARISE, DSKADIQKVFNLFDSERAGFITLKDLRKVAKELGET, and MDDSELQEMIDRADSDGDTQVTFEDFYNIMTKKTFA. Ca(2+) is bound by residues Asp52, Asp54, Thr56, Ser58, Glu63, Asp88, Asp90, Ser92, Gln94, and Glu99.

Belongs to the centrin family. As to quaternary structure, monomer.

Its subcellular location is the cytoplasm. It is found in the cytoskeleton. In terms of biological role, plays a fundamental role in microtubule organizing center structure and function. Component of the infraciliary lattice (ICL) and the ciliary basal bodies. The protein is Caltractin ICL1f (Icl1f) of Paramecium tetraurelia.